The chain runs to 113 residues: Non-specific lipid-transfer protein 6 (113 aa).

An N-terminal signal peptide occupies residues 1–19 (MRSLLLAVCLVLALHCGEA). Intrachain disulfides connect C23–C70, C33–C47, C48–C95, and C68–C109.

The protein belongs to the plant LTP family.

Its function is as follows. Plant non-specific lipid-transfer proteins transfer phospholipids as well as galactolipids across membranes. May play a role in wax or cutin deposition in the cell walls of expanding epidermal cells and certain secretory tissues. The polypeptide is Non-specific lipid-transfer protein 6 (LTP6) (Arabidopsis thaliana (Mouse-ear cress)).